Consider the following 333-residue polypeptide: Glycerol-3-phosphate dehydrogenase [NAD(P)+] (333 aa).

The NADPH site is built by serine 10, tryptophan 11, histidine 31, arginine 32, and lysine 105. Positions 105, 136, and 138 each coordinate sn-glycerol 3-phosphate. Residue alanine 140 participates in NADPH binding. Sn-glycerol 3-phosphate-binding residues include lysine 191, aspartate 244, serine 254, arginine 255, and asparagine 256. The active-site Proton acceptor is lysine 191. NADPH is bound at residue arginine 255. Positions 279 and 281 each coordinate NADPH.

It belongs to the NAD-dependent glycerol-3-phosphate dehydrogenase family.

The protein localises to the cytoplasm. The catalysed reaction is sn-glycerol 3-phosphate + NAD(+) = dihydroxyacetone phosphate + NADH + H(+). The enzyme catalyses sn-glycerol 3-phosphate + NADP(+) = dihydroxyacetone phosphate + NADPH + H(+). It participates in membrane lipid metabolism; glycerophospholipid metabolism. In terms of biological role, catalyzes the reduction of the glycolytic intermediate dihydroxyacetone phosphate (DHAP) to sn-glycerol 3-phosphate (G3P), the key precursor for phospholipid synthesis. The sequence is that of Glycerol-3-phosphate dehydrogenase [NAD(P)+] from Chlorobium phaeobacteroides (strain DSM 266 / SMG 266 / 2430).